A 360-amino-acid chain; its full sequence is Biotin synthase (360 aa).

The region spanning 83 to 315 (FCGKYFDLCT…KSFLRYCGGR (233 aa)) is the Radical SAM core domain. [4Fe-4S] cluster is bound by residues cysteine 101, cysteine 105, and cysteine 108. [2Fe-2S] cluster is bound by residues serine 145, cysteine 180, cysteine 240, and arginine 310.

The protein belongs to the radical SAM superfamily. Biotin synthase family. Homodimer. [4Fe-4S] cluster is required as a cofactor. It depends on [2Fe-2S] cluster as a cofactor.

It catalyses the reaction (4R,5S)-dethiobiotin + (sulfur carrier)-SH + 2 reduced [2Fe-2S]-[ferredoxin] + 2 S-adenosyl-L-methionine = (sulfur carrier)-H + biotin + 2 5'-deoxyadenosine + 2 L-methionine + 2 oxidized [2Fe-2S]-[ferredoxin]. It functions in the pathway cofactor biosynthesis; biotin biosynthesis; biotin from 7,8-diaminononanoate: step 2/2. Catalyzes the conversion of dethiobiotin (DTB) to biotin by the insertion of a sulfur atom into dethiobiotin via a radical-based mechanism. The polypeptide is Biotin synthase (Fusobacterium nucleatum subsp. nucleatum (strain ATCC 25586 / DSM 15643 / BCRC 10681 / CIP 101130 / JCM 8532 / KCTC 2640 / LMG 13131 / VPI 4355)).